The primary structure comprises 242 residues: Orotidine 5'-phosphate decarboxylase (242 aa).

Residues D22, K44, 71–80 (DLKYHDIPNT), T130, R190, Q199, G219, and R220 each bind substrate. K73 acts as the Proton donor in catalysis.

The protein belongs to the OMP decarboxylase family. Type 1 subfamily. Homodimer.

It catalyses the reaction orotidine 5'-phosphate + H(+) = UMP + CO2. The protein operates within pyrimidine metabolism; UMP biosynthesis via de novo pathway; UMP from orotate: step 2/2. Its function is as follows. Catalyzes the decarboxylation of orotidine 5'-monophosphate (OMP) to uridine 5'-monophosphate (UMP). This Laribacter hongkongensis (strain HLHK9) protein is Orotidine 5'-phosphate decarboxylase.